The sequence spans 562 residues: Arginine--tRNA ligase (562 aa).

The short motif at 129 to 139 (ANPTGPLHVGH) is the 'HIGH' region element.

This sequence belongs to the class-I aminoacyl-tRNA synthetase family. Monomer.

It is found in the cytoplasm. The enzyme catalyses tRNA(Arg) + L-arginine + ATP = L-arginyl-tRNA(Arg) + AMP + diphosphate. This Xylella fastidiosa (strain 9a5c) protein is Arginine--tRNA ligase (argS).